A 105-amino-acid polypeptide reads, in one-letter code: Late embryogenesis abundant protein Lea5-A (105 aa).

It belongs to the LEA type 3 family.

In Gossypium hirsutum (Upland cotton), this protein is Late embryogenesis abundant protein Lea5-A (LEA5-A).